A 195-amino-acid polypeptide reads, in one-letter code: Dynactin subunit 6 (195 aa).

The protein belongs to the dynactin subunits 5/6 family. Dynactin subunit 6 subfamily. Member of the pointed-end complex of the dynactin shoulder complex which contains dctn4, dctn5 and dctn6 subunits and Actr10. Within the complex dctn6 forms a heterodimer with dctn5. Interacts with plk1.

Its subcellular location is the cytoplasm. It is found in the cytoskeleton. The protein localises to the chromosome. It localises to the centromere. The protein resides in the kinetochore. Part of the dynactin complex that activates the molecular motor dynein for ultra-processive transport along microtubules. The polypeptide is Dynactin subunit 6 (dctn6) (Danio rerio (Zebrafish)).